We begin with the raw amino-acid sequence, 184 residues long: ATP synthase subunit b, chloroplastic (184 aa).

Residues 27–49 (LATNPINLSVVLGVLIFFGKGVL) form a helical membrane-spanning segment.

It belongs to the ATPase B chain family. In terms of assembly, F-type ATPases have 2 components, F(1) - the catalytic core - and F(0) - the membrane proton channel. F(1) has five subunits: alpha(3), beta(3), gamma(1), delta(1), epsilon(1). F(0) has four main subunits: a(1), b(1), b'(1) and c(10-14). The alpha and beta chains form an alternating ring which encloses part of the gamma chain. F(1) is attached to F(0) by a central stalk formed by the gamma and epsilon chains, while a peripheral stalk is formed by the delta, b and b' chains.

It localises to the plastid. It is found in the chloroplast thylakoid membrane. F(1)F(0) ATP synthase produces ATP from ADP in the presence of a proton or sodium gradient. F-type ATPases consist of two structural domains, F(1) containing the extramembraneous catalytic core and F(0) containing the membrane proton channel, linked together by a central stalk and a peripheral stalk. During catalysis, ATP synthesis in the catalytic domain of F(1) is coupled via a rotary mechanism of the central stalk subunits to proton translocation. Its function is as follows. Component of the F(0) channel, it forms part of the peripheral stalk, linking F(1) to F(0). This is ATP synthase subunit b, chloroplastic from Cuscuta exaltata (Tall dodder).